The primary structure comprises 211 residues: Peptide methionine sulfoxide reductase MsrA (211 aa).

Cys-52 is an active-site residue.

Belongs to the MsrA Met sulfoxide reductase family.

It carries out the reaction L-methionyl-[protein] + [thioredoxin]-disulfide + H2O = L-methionyl-(S)-S-oxide-[protein] + [thioredoxin]-dithiol. The catalysed reaction is [thioredoxin]-disulfide + L-methionine + H2O = L-methionine (S)-S-oxide + [thioredoxin]-dithiol. Its function is as follows. Has an important function as a repair enzyme for proteins that have been inactivated by oxidation. Catalyzes the reversible oxidation-reduction of methionine sulfoxide in proteins to methionine. This Photobacterium profundum (strain SS9) protein is Peptide methionine sulfoxide reductase MsrA.